Consider the following 60-residue polypeptide: Cytotoxin 1 (60 aa).

4 cysteine pairs are disulfide-bonded: Cys-3-Cys-21, Cys-14-Cys-38, Cys-42-Cys-53, and Cys-54-Cys-59.

Belongs to the three-finger toxin family. Short-chain subfamily. Type IA cytotoxin sub-subfamily. As to quaternary structure, monomer in solution; Homodimer and oligomer in the presence of negatively charged lipids forming a pore with a size ranging between 20 and 30 Angstroms. Expressed by the venom gland.

Its subcellular location is the secreted. The protein resides in the target cell membrane. In terms of biological role, shows cytolytic activity on many different cells by forming pore in lipid membranes. In vivo, increases heart rate or kills the animal by cardiac arrest. In addition, it binds to heparin with high affinity, interacts with Kv channel-interacting protein 1 (KCNIP1) in a calcium-independent manner, and binds to integrin alpha-V/beta-3 (ITGAV/ITGB3) with moderate affinity. The protein is Cytotoxin 1 of Naja naja (Indian cobra).